We begin with the raw amino-acid sequence, 173 residues long: Pectinesterase inhibitor 2 (173 aa).

The N-terminal stretch at 1–25 (MAAYLTNRVLMSSLMFFVMTGSLNA) is a signal peptide. Residues C34 and C43 are joined by a disulfide bond. N-linked (GlcNAc...) asparagine glycosylation is found at N39 and N63. An intrachain disulfide couples C99 to C139.

It belongs to the PMEI family. In terms of assembly, interacts with PPME1. In terms of tissue distribution, highest expression in flowers. Expressed exclusively at the pollen tube tip.

It is found in the secreted. The protein localises to the extracellular space. The protein resides in the apoplast. Functionally, inhibits pectin methylesterase (PME) from flowers, siliques and pollen tube. This Arabidopsis thaliana (Mouse-ear cress) protein is Pectinesterase inhibitor 2.